Consider the following 313-residue polypeptide: Porphobilinogen deaminase (313 aa).

C242 bears the S-(dipyrrolylmethanemethyl)cysteine mark.

The protein belongs to the HMBS family. As to quaternary structure, monomer. Requires dipyrromethane as cofactor.

It catalyses the reaction 4 porphobilinogen + H2O = hydroxymethylbilane + 4 NH4(+). It participates in porphyrin-containing compound metabolism; protoporphyrin-IX biosynthesis; coproporphyrinogen-III from 5-aminolevulinate: step 2/4. Functionally, tetrapolymerization of the monopyrrole PBG into the hydroxymethylbilane pre-uroporphyrinogen in several discrete steps. The sequence is that of Porphobilinogen deaminase from Pseudomonas entomophila (strain L48).